The following is a 302-amino-acid chain: Haloalkane dehalogenase (302 aa).

Positions 48 to 150 (PVLLMHGEPS…AGLVIANTGL (103 aa)) constitute an AB hydrolase-1 domain. D123 functions as the Nucleophile in the catalytic mechanism. D249 functions as the Proton donor in the catalytic mechanism. Catalysis depends on H278, which acts as the Proton acceptor.

The protein belongs to the haloalkane dehalogenase family. Type 1 subfamily. Monomer.

The catalysed reaction is 1-haloalkane + H2O = a halide anion + a primary alcohol + H(+). In terms of biological role, catalyzes hydrolytic cleavage of carbon-halogen bonds in halogenated aliphatic compounds, leading to the formation of the corresponding primary alcohols, halide ions and protons. The protein is Haloalkane dehalogenase of Caulobacter sp. (strain K31).